A 246-amino-acid polypeptide reads, in one-letter code: Ubiquitin-conjugating enzyme E2 6 (246 aa).

At 1–224 the chain is on the cytoplasmic side; sequence MATKQAQKRL…LEKQHNDKPN (224 aa). A UBC core domain is found at 5–154; it reads QAQKRLTKEY…FNSTRFKLVF (150 aa). Cys87 acts as the Glycyl thioester intermediate in catalysis. A helical transmembrane segment spans residues 225-245; the sequence is GSSSMFYIGVALFLFLVGLFM.

This sequence belongs to the ubiquitin-conjugating enzyme family.

It is found in the endoplasmic reticulum membrane. The catalysed reaction is S-ubiquitinyl-[E1 ubiquitin-activating enzyme]-L-cysteine + [E2 ubiquitin-conjugating enzyme]-L-cysteine = [E1 ubiquitin-activating enzyme]-L-cysteine + S-ubiquitinyl-[E2 ubiquitin-conjugating enzyme]-L-cysteine.. It participates in protein modification; protein ubiquitination. Catalyzes the covalent attachment of ubiquitin to other proteins. Functions in degradation of misfolded or regulated proteins localized in the endoplasmic reticulum (ER) lumen or membrane via the ubiquitin-proteasome system. Cognate E2 conjugating enzyme for the DOA10 ubiquitin ligase complex, which is part of the ERAD-C pathway responsible for the rapid degradation of membrane proteins with misfolded cytoplasmic domains. This Candida glabrata (strain ATCC 2001 / BCRC 20586 / JCM 3761 / NBRC 0622 / NRRL Y-65 / CBS 138) (Yeast) protein is Ubiquitin-conjugating enzyme E2 6 (UBC6).